The sequence spans 521 residues: MSDSFDAAASHFHARSSVNDSSFHLSRQEEAELLEGALHAPYPEELLFDDDEYTAKTQYDGPRYAMPTMFYPNKPTPGWPLNYVFGNERSRFEKILSNFVLRNLMLQVLAPCFVLLWCAVPMPRYEDSQGTVRIRFWFFLIFYYGIYNAVGLLWITKLFHIYSVNWCPSKLGGTITYILFWMFSLLVGSLVVYFTAWRQITFTWITLMFISMIIPIGISFSKLWKKHSRRTAQFLTQLALLEPEVRSNAVLETIGWKDAYAHYSWFIVVLLVTLLVYIVGEYLTNLYMSTLPHSSTVAIMYVYSWTGTVSLCNLVSSWILNTKTHSYALVTVFKLYFELTLQVYVRNLYARLESPQQFVLVQIASSLTMMSVIPLITMSRTVFRLNVLMTKSMDSYVVYRKNMGRNFYVKCVASNVSMLSFLGWSLILHFGSNAPLYPYFSFSKEEPYSFKLTFYASTAVWISEMVASYLTRLIMRKFYDFEVALEAIRDFVEYPDMIPTFIAVSIHVLQNVVFSIISLHF.

10 helical membrane-spanning segments follow: residues 103-123 (NLMLQVLAPCFVLLWCAVPMP), 136-156 (FWFFLIFYYGIYNAVGLLWIT), 177-197 (YILFWMFSLLVGSLVVYFTAW), 200-220 (ITFTWITLMFISMIIPIGISF), 259-279 (AYAHYSWFIVVLLVTLLVYIV), 299-319 (IMYVYSWTGTVSLCNLVSSWI), 327-346 (YALVTVFKLYFELTLQVYVR), 358-378 (FVLVQIASSLTMMSVIPLITM), 411-431 (CVASNVSMLSFLGWSLILHFG), and 450-470 (FKLTFYASTAVWISEMVASYL).

Its subcellular location is the membrane. This is an uncharacterized protein from Schizosaccharomyces pombe (strain 972 / ATCC 24843) (Fission yeast).